The sequence spans 287 residues: uncharacterized protein (287 aa).

Positions 183 to 281 (WEAARYLQEH…GISPIEYRKI (99 aa)) constitute an HTH araC/xylS-type domain. 2 DNA-binding regions (H-T-H motif) span residues 200 to 221 (KDLS…QQVL) and 248 to 271 (MGVI…KQIE).

This is an uncharacterized protein from Bacillus subtilis (strain 168).